A 334-amino-acid polypeptide reads, in one-letter code: Hematopoietic SH2 domain-containing protein (334 aa).

Residues 34–125 (WFHGTISREA…PFGELLTQAC (92 aa)) enclose the SH2 domain. 2 disordered regions span residues 157-181 (EVQR…KGEF) and 254-280 (EDSC…ATFR). Positions 258–267 (AATTSLQNPA) are enriched in polar residues.

As to quaternary structure, interacts with FES and TNK2. May be phosphorylated by FES and ACK1. Predominantly expressed in spleen and thymus. Appears not to be expressed in heart, brain, liver, kidney, embryo, lung and ovary.

Its subcellular location is the cytoplasm. The protein resides in the mitochondrion. Its function is as follows. Adapter protein involved in tyrosine kinase and CD28 signaling. May be a modulator of the apoptotic response through its ability to affect mitochondrial stability. In Mus musculus (Mouse), this protein is Hematopoietic SH2 domain-containing protein (Hsh2d).